The following is a 313-amino-acid chain: Olfactory receptor 10Z1 (313 aa).

Topologically, residues 1–25 (MGQTNVTSWRDFVFLGFSSSGELQL) are extracellular. The N-linked (GlcNAc...) asparagine glycan is linked to Asn-5. A helical transmembrane segment spans residues 26–46 (LLFALFLSLYLVTLTSNVFII). The Cytoplasmic portion of the chain corresponds to 47–54 (IAIRLDSH). The chain crosses the membrane as a helical span at residues 55 to 75 (LHTPMYLFLSFLSFSETCYTL). Over 76–99 (GIIPRMLSGLAGGDQAISYVGCAA) the chain is Extracellular. A disulfide bond links Cys-97 and Cys-189. The helical transmembrane segment at 100–120 (QMFFSASWACTNCFLLAAMGF) threads the bilayer. Residues 121–139 (DRYVAICAPLHYASHMNPT) are Cytoplasmic-facing. A helical transmembrane segment spans residues 140 to 160 (LCAQLVITSFLTGYLFGLGMT). Residues 161–197 (LVIFHLSFCSSHEIQHFFCDTPPVLSLACGDTGPSEL) are Extracellular-facing. Residues 198 to 217 (RIFILSLLVLLVSFFFITIS) traverse the membrane as a helical segment. Residues 218–237 (YAYILAAILRIPSAEGQKKA) lie on the Cytoplasmic side of the membrane. Residues 238–258 (FSTCASHLTVVIIHYGCASFV) traverse the membrane as a helical segment. Residues 259–271 (YLRPKASYSLERD) are Extracellular-facing. A helical transmembrane segment spans residues 272-292 (QLIAMTYTVVTPLLNPIVYSL). At 293 to 313 (RNRAIQTALRNAFRGRLLGKG) the chain is on the cytoplasmic side.

The protein belongs to the G-protein coupled receptor 1 family.

The protein resides in the cell membrane. Functionally, odorant receptor. The sequence is that of Olfactory receptor 10Z1 (OR10Z1) from Homo sapiens (Human).